The chain runs to 507 residues: MADALANQLNNTSLGEANSEMRWREQLNMPAKDARPQTEDVTATKGLEFEDFYIKRELMMGIFEAGFEKPSPIQEETIPVALTGRDILARAKNGTGKTAAFVIPTLERINPKSTKTQALILVPTRELALQTSQVCKTLGKHLGINVMVTTGGTGLMDDIIRLNDAVHILVGTPGRVLDLASKGVADLSECPTFVMDEADKLLSPEFTPVIEQLLSFHPKDRQVMLFSATFPLIVKSFKDKHMRNPYEINLMDELTLRGITQYYAFVEEKQKVHCLNTLFSKLQINQSIIFCNSTNRVELLAKKITELGYSCFYSHARMLQQHRNRVFHDFRNGVCRNLVCSDLLTRGIDIQAVNVVINFDFPKNAETYLHRIGRSGRFGHLGLAINLINWDDRFNLYKIEQELGTEIQPIPQNIDKKLYVYDSPETIPRPISNPSQPRQITNTPANTSTADRRHHNHPNNGQYQFNRGRGSYRGRGQGQRRSAQTETNKFGHPQGQHSGKTSTAPVS.

Positions Met-1–Glu-20 are disordered. A compositionally biased stretch (polar residues) spans Asn-7–Glu-16. Residues Leu-47 to Glu-75 carry the Q motif motif. A Helicase ATP-binding domain is found at Ile-78 to Ile-248. Ala-91 to Thr-98 serves as a coordination point for ATP. A DEAD box motif is present at residues Asp-196–Asp-199. One can recognise a Helicase C-terminal domain in the interval Gly-258–Leu-418. The segment at Glu-425–Ser-507 is disordered. Composition is skewed to polar residues over residues Ser-432–Thr-449 and Gly-495–Ser-507.

This sequence belongs to the DEAD box helicase family. DDX6/DHH1 subfamily.

It localises to the cytoplasm. Its subcellular location is the P-body. The enzyme catalyses ATP + H2O = ADP + phosphate + H(+). ATP-dependent RNA helicase involved in mRNA turnover, and more specifically in mRNA decapping. Is involved in G1/S DNA-damage checkpoint recovery, probably through the regulation of the translational status of a subset of mRNAs. May also have a role in translation and mRNA nuclear export. The chain is ATP-dependent RNA helicase dhh1 (dhh1) from Neosartorya fischeri (strain ATCC 1020 / DSM 3700 / CBS 544.65 / FGSC A1164 / JCM 1740 / NRRL 181 / WB 181) (Aspergillus fischerianus).